Reading from the N-terminus, the 262-residue chain is MKIGTQNQAFFPENILEKFRYIKEMGFDGFEIDGKLLVNNIEEVKAAIKETGLPVTTACGGYDGWIGDFIEERRLNGLKQIERILEALAEVGGKGIVVPAAWGMFTFRLPPMTSPRSLDGDRKMVSDSLRVLEQVAARTGTVVYLEPLNRYQDHMINTLADARRYIVENDLKHVQIIGDFYHMNIEEDNLAQALHDNRDLLGHVHIADNHRYQPGSGTLDFHALFEQLRADNYQGYVVYEGRIRAEDPAQAYRDSLAWLRTC.

Glu146 functions as the Proton donor/acceptor in the catalytic mechanism. Residues Glu146 and Asp179 each coordinate Mn(2+). A substrate-binding site is contributed by His182. Residue His205 participates in Mn(2+) binding. Arg211 is a substrate binding site. Residue Glu240 is the Proton donor/acceptor of the active site. A Mn(2+)-binding site is contributed by Glu240.

The protein belongs to the hyi family. Requires Mn(2+) as cofactor.

It catalyses the reaction a 3-dehydro-D-guloside = a 3-dehydro-D-glucoside. In terms of biological role, catalyzes the epimerization at C4 of 3-dehydro-D-gulosides leading to 3-dehydro-D-glucosides. Probably functions in a metabolic pathway that transforms D-gulosides to D-glucosides. Can use methyl alpha-3-dehydro-D-glucoside and methyl beta-3-dehydro-D-glucoside as substrates in vitro. However, the actual specific physiological substrates for this metabolic pathway are unknown. Cannot act on D-psicose, D-fructose, D-tagatose, D-sorbose, L-xylulose, or L-ribulose. The chain is 3-dehydro-D-guloside 4-epimerase (ycjR) from Escherichia coli (strain K12).